A 291-amino-acid chain; its full sequence is MLKSSWRKTALMAAAAVPLLLASGSLWASADAIQQKLADLEKRSGGRLGVALINTADDSQTLYRGDERFAMCSTGKVMAAAAVLKQSESNPEVVNKRLEIKKSDLVVWSPITEKHLQSGMTLAELSAAALQYSDNTAMNKMISYLGGPEKVTAFAQSIGDVTFRLDRTEPALNSAIPGDKRDTTTPLAMAESLRKLTLGNALGEQQRAQLVTWLKGNTTGGQSIRAGLPASWAVGDKTGAGDYGTTNDIAVIWPENHAPLVLVTYFTQPQQDAKSRKEVLAAAAKIVTEGL.

Positions 1–24 (MLKSSWRKTALMAAAAVPLLLASG) are cleaved as a signal peptide. Serine 73 (acyl-ester intermediate) is an active-site residue. Residue 237–239 (KTG) coordinates substrate.

This sequence belongs to the class-A beta-lactamase family.

It catalyses the reaction a beta-lactam + H2O = a substituted beta-amino acid. Its function is as follows. Hydrolyzes broad-spectrum beta-lactam antibiotics. Active against cephalosporins. This is Beta-lactamase OXY-1 (bla) from Klebsiella oxytoca.